The chain runs to 572 residues: Transmembrane glycoprotein NMB (572 aa).

The N-terminal stretch at 1-22 (MECLYYFLGFLLLAARLPLDAA) is a signal peptide. Residues 23–498 (KRFHDVLGNE…DPASPLRMAN (476 aa)) are Extracellular-facing. Residues 64 to 66 (RGD) carry the Cell attachment site motif. N93, N134, N146, N200, N249, N275, N296, N300, N306, and N312 each carry an N-linked (GlcNAc...) asparagine glycan. Residues 240 to 327 (VTMFQKNDRN…AAPGPCPPPP (88 aa)) form the PKD domain. The tract at residues 320–362 (PGPCPPPPPPPRPSKPTPSLATTLKSYDSNTPGPAGDNPLELS) is disordered. The segment covering 321–335 (GPCPPPPPPPRPSKP) has biased composition (pro residues). Residues 338-351 (SLATTLKSYDSNTP) show a composition bias toward polar residues. N-linked (GlcNAc...) asparagine glycosylation is found at N459 and N467. The chain crosses the membrane as a helical span at residues 499–519 (SALISVGCLAIFVTVISLLVY). Topologically, residues 520–572 (KKHKEYNPIENSPGNVVRSKGLSVFLNRAKAVFFPGNQEKDPLLKNQEFKGVS) are cytoplasmic. S542 is subject to Phosphoserine.

It belongs to the PMEL/NMB family. In terms of tissue distribution, widely expressed, but very low expression, if any, in the brain. Expressed in the epidermis with higher levels in melanocytes compared with keratinocytes and Langerhans cells (at protein level). Expressed in peripheral blood, but not bone marrow mononuclear cells. Expressed in tissue macrophages, including liver Kuppfer cells and lung alveolar macrophages, in podocytes and in some cells of the ciliary body of the eye (at protein level). May be overexpressed in various cancers, including melanoma and glioblastoma multiforme.

Its subcellular location is the cell membrane. The protein localises to the melanosome membrane. The protein resides in the early endosome membrane. In terms of biological role, could be a melanogenic enzyme. The polypeptide is Transmembrane glycoprotein NMB (GPNMB) (Homo sapiens (Human)).